Reading from the N-terminus, the 522-residue chain is Maturase K (522 aa).

It belongs to the intron maturase 2 family. MatK subfamily.

It localises to the plastid. It is found in the chloroplast. Functionally, usually encoded in the trnK tRNA gene intron. Probably assists in splicing its own and other chloroplast group II introns. This chain is Maturase K, found in Pillansia templemannii.